The chain runs to 442 residues: Capsid vertex component 1 (442 aa).

The protein belongs to the herpesviridae CVC1 protein family. In terms of assembly, interacts (via C-terminus) with capsid vertex component 2/CVC2.

Its subcellular location is the virion. It is found in the host nucleus. In terms of biological role, capsid vertex-specific component that plays a role during viral DNA encapsidation, assuring correct genome cleavage and presumably stabilizing capsids that contain full-length viral genomes. This is Capsid vertex component 1 from Human herpesvirus 6A (strain Uganda-1102) (HHV-6 variant A).